Here is a 275-residue protein sequence, read N- to C-terminus: Homeobox-leucine zipper protein ATHB-17 (275 aa).

A disordered region spans residues 95–143; that stretch reads SSPLSDEGSGGGRDQLRLDMNRLPSSEDGDDEEFSHDDGSAPPRKKLRL. The homeobox DNA-binding region spans 136–195; sequence PPRKKLRLTREQSRLLEDSFRQNHTLNPKQKEVLAKHLMLRPRQIEVWFQNRRARSKLKQ. Positions 203–224 are leucine-zipper; that stretch reads LKRWFGSLTEENHRLHREVEEL. The segment at 252–275 is disordered; that stretch reads AASPSRAVVPVPAKKTFPPQERDR.

Belongs to the HD-ZIP homeobox family. Class II subfamily.

The protein localises to the nucleus. In terms of biological role, probable transcription factor. This Arabidopsis thaliana (Mouse-ear cress) protein is Homeobox-leucine zipper protein ATHB-17 (ATHB-17).